Consider the following 766-residue polypeptide: Hypoxia-inducible factor 1-alpha (766 aa).

Positions 1 to 26 (MDTGVVPEKKSRVSSDRRKEKSRDAA) are disordered. Residues 7–26 (PEKKSRVSSDRRKEKSRDAA) are compositionally biased toward basic and acidic residues. Positions 17 to 70 (RRKEKSRDAARCRRGKESEVFYELAQELPLPHSVTSNLDKASIMRLAISYLHMR) constitute a bHLH domain. PAS domains follow at residues 82–159 (EERE…TSKK) and 230–300 (PHPS…FAKG). Positions 304-347 (TGQYRMLAKRGGFVWVETQATVIYNNKNSQPQCVVCVNYVLSGI) constitute a PAC domain. The disordered stretch occupies residues 361–383 (DMRPVKKELEEEESSEPEVSPVL). The residue at position 426 (P426) is a 4-hydroxyproline. A disordered region spans residues 475–509 (DQHLVPNTSVDTTEVSTGPDSSSTPGSHSFTEPDS). Over residues 479–489 (VPNTSVDTTEV) the composition is skewed to polar residues. A compositionally biased stretch (low complexity) spans 490-503 (STGPDSSSTPGSHS). P559 carries the 4-hydroxyproline modification. The Nuclear localization signal signature appears at 718–721 (LLGI). The residue at position 743 (N743) is a (3S)-3-hydroxyasparagine.

Efficient DNA binding requires heterodimerization of an alpha and a beta/ARNT subunit. Post-translationally, in normoxia, is hydroxylated on Pro-426 and Pro-559. The hydroxylated prolines promote interaction with VHL, initiating rapid ubiquitination and subsequent proteasomal degradation. Under hypoxia, proline hydroxylation is impaired and ubiquitination is attenuated, resulting in stabilization. In terms of processing, in normoxia, is hydroxylated on Asn-743, thus abrogating interaction with CREBBP and EP300 and preventing transcriptional activation. The iron and 2-oxoglutarate dependent 3-hydroxylation of asparagine is (S) stereospecific within HIF CTAD domains.

Its subcellular location is the cytoplasm. It is found in the nucleus. It localises to the nucleus speckle. Induced by reactive oxygen species (ROS). In terms of biological role, functions as a master transcriptional regulator of the adaptive response to hypoxia. Under hypoxic conditions, activates the transcription of over 40 genes, including erythropoietin, glucose transporters, glycolytic enzymes, vascular endothelial growth factor, HILPDA, and other genes whose protein products increase oxygen delivery or facilitate metabolic adaptation to hypoxia. Plays an essential role in embryonic vascularization, tumor angiogenesis and pathophysiology of ischemic disease. The sequence is that of Hypoxia-inducible factor 1-alpha (hif1a) from Oncorhynchus mykiss (Rainbow trout).